The following is a 229-amino-acid chain: Cell division topological specificity factor homolog, chloroplastic (229 aa).

The transit peptide at methionine 1 to serine 30 directs the protein to the chloroplast. Residues valine 35 to aspartate 141 are interaction with MIND1. The tract at residues valine 142 to lysine 169 is homodimerization.

This sequence belongs to the MinE family. Homodimer. Interacts with MIND1. These interactions are required for proper intraplastidic localization. Binds to ARC3. As to expression, expressed in green tissues, especially at the shoot apex. Also present in leaves, stems, buds, and flowers, especially in sepals, siliques (tip and base), and anthers (mostly in pollen grains).

Its subcellular location is the plastid. The protein localises to the chloroplast. Acts as a topological specificity factor during plastid division and specify plastid constriction sites (such as the Z-ring) in a MCD1-dependent manner. Especially involved in epidermal plastids division in a FTSZ1-dependent manner. Required for the proper formation of FtsZ rings at the division site in nongreen plastids (e.g. etioplasts). May contribute to gravitropism in stems and hypocotyls. Stimulates MIND1 ATPase activity. In cooperation with MIND1, prevents FtsZ ring formation anywhere outside of the mid-plastids. This is Cell division topological specificity factor homolog, chloroplastic from Arabidopsis thaliana (Mouse-ear cress).